Here is a 254-residue protein sequence, read N- to C-terminus: Alcohol dehydrogenase 1 (254 aa).

Residue 10–33 coordinates NAD(+); sequence FVAGLGGIGFDTSREIVKKGPKNL. Position 138 (Ser138) interacts with substrate. Tyr151 serves as the catalytic Proton acceptor.

Belongs to the short-chain dehydrogenases/reductases (SDR) family. Homodimer.

It carries out the reaction a primary alcohol + NAD(+) = an aldehyde + NADH + H(+). The enzyme catalyses a secondary alcohol + NAD(+) = a ketone + NADH + H(+). The chain is Alcohol dehydrogenase 1 (Adh1) from Drosophila mojavensis (Fruit fly).